Reading from the N-terminus, the 82-residue chain is Kappa-actitoxin-Avd4j (82 aa).

An N-terminal signal peptide occupies residues Met-1–Ala-19. The propeptide occupies Ala-20–Phe-31. 3 disulfides stabilise this stretch: Cys-38-Cys-73, Cys-40-Cys-66, and Cys-56-Cys-74.

The protein belongs to the sea anemone type 3 (BDS) potassium channel toxin family. Weakly expressed in the ectodermal tissue from the distal and proximal tentacles, body wall, and oral disk.

The protein localises to the secreted. It is found in the nematocyst. Blocks Kv3 voltage-gated potassium channels. Reduces blood pressure. The sequence is that of Kappa-actitoxin-Avd4j from Anemonia viridis (Snakelocks anemone).